We begin with the raw amino-acid sequence, 342 residues long: Tetraacyldisaccharide 4'-kinase (342 aa).

Residue 56–63 (TAGGAGKT) participates in ATP binding.

It belongs to the LpxK family.

The enzyme catalyses a lipid A disaccharide + ATP = a lipid IVA + ADP + H(+). The protein operates within glycolipid biosynthesis; lipid IV(A) biosynthesis; lipid IV(A) from (3R)-3-hydroxytetradecanoyl-[acyl-carrier-protein] and UDP-N-acetyl-alpha-D-glucosamine: step 6/6. Transfers the gamma-phosphate of ATP to the 4'-position of a tetraacyldisaccharide 1-phosphate intermediate (termed DS-1-P) to form tetraacyldisaccharide 1,4'-bis-phosphate (lipid IVA). This Parvibaculum lavamentivorans (strain DS-1 / DSM 13023 / NCIMB 13966) protein is Tetraacyldisaccharide 4'-kinase.